An 899-amino-acid chain; its full sequence is MVSLGGIARKIFGSSNERRIRGNKPRVAAINALEDSIKALSDAELAAKTEEFKGELAKGKTLDDILIPAFAVAREASRRALGMRPFDVQLIGGMILHENAIAEMKTGEGKTLVATLAVYLNALSGKGVHVVTVNDYLASRDAAIMAKLYSFLGLTTGVIVHGMNDDERREAYACDITYATNNELGFDYLRDNMKYERGQMVQRGHNYAIVDEVDSILVDEARTPLIISGPLDDRSDLYTTIDAFIPMLSAEDYEIDEKQKSANFSEVGTEKLENLLKDAGLLKGVSLYDVENVAIVHHINNALKAHKLFQRDKDYIVRNDEIVIIDEFTGRMMPGRRYSEGQHQALEAKEKVTIQPENQTLASITFQNYFRMYSKLAGMTGTANTEAEEFQDIYGLSVIEVPTNLPILRIDEDDEVYRTFEEKFKAIIEEIKASASRNQPVLVGTTSIEKSELLATMLRQSGFTDFSVLNARYHEQEAYIVSQAGVPGAVTIATNMAGRGTDIQLGGNIDMRLERDLEGMEPGPERDAKEQAIREEVKALKEKALAAGGLYVIATERHESRRIDNQLRGRSGRQGDPGRSKFYLSLQDDLMRIFGSDRMDSMLQKLGLKEGEAIVHPWINKALERAQKKVEARNFDIRKNLLKYDDVLNDQRKVIFEQRVELMDAEDLTETIDDMRHELIDTIVRTHIPEKAYAEQWDVAGLKTAMTGILNLDLPIEDWAQEEGIAEDDIVERVKKAADEVMAEKTERFGPEIMAYIERSVLLQTIDNLWREHIVNLDHLRSVVGFRGYAQRDPLQEYKAEAFELFQALLANMREGVTAQMMRVEIVREAPPEPTLPIMHGHHEDPQTGQDEFAAADGIVAPENRNPADPSTWGKVGRNEMCPCGSGKRFKHCHGALLA.

ATP is bound by residues glutamine 89, 107–111 (GEGKT), and aspartate 502. Positions 882, 884, 893, and 894 each coordinate Zn(2+).

The protein belongs to the SecA family. In terms of assembly, monomer and homodimer. Part of the essential Sec protein translocation apparatus which comprises SecA, SecYEG and auxiliary proteins SecDF-YajC and YidC. Zn(2+) serves as cofactor.

It is found in the cell inner membrane. Its subcellular location is the cytoplasm. It catalyses the reaction ATP + H2O + cellular proteinSide 1 = ADP + phosphate + cellular proteinSide 2.. In terms of biological role, part of the Sec protein translocase complex. Interacts with the SecYEG preprotein conducting channel. Has a central role in coupling the hydrolysis of ATP to the transfer of proteins into and across the cell membrane, serving both as a receptor for the preprotein-SecB complex and as an ATP-driven molecular motor driving the stepwise translocation of polypeptide chains across the membrane. The chain is Protein translocase subunit SecA from Allorhizobium ampelinum (strain ATCC BAA-846 / DSM 112012 / S4) (Agrobacterium vitis (strain S4)).